Here is an 83-residue protein sequence, read N- to C-terminus: MAELGEADEAELQRLVAAEQQKAQFTAQVHHFMELCWDKCVEKPGSRLDSRTENCLSSCVDRFIDTTLAITGRFAQIVQKGGQ.

At Ala2 the chain carries N-acetylalanine. A Twin CX3C motif motif is present at residues 36–59 (CWDKCVEKPGSRLDSRTENCLSSC). Intrachain disulfides connect Cys36-Cys59 and Cys40-Cys55.

The protein belongs to the small Tim family. Heterohexamer; possibly composed of 3 copies of TIMM8B and 3 copies of TIMM13, named soluble 70 kDa complex. Associates with the TIM22 complex, whose core is composed of TIMM22.

It localises to the mitochondrion inner membrane. In terms of biological role, probable mitochondrial intermembrane chaperone that participates in the import and insertion of some multi-pass transmembrane proteins into the mitochondrial inner membrane. Also required for the transfer of beta-barrel precursors from the TOM complex to the sorting and assembly machinery (SAM complex) of the outer membrane. Acts as a chaperone-like protein that protects the hydrophobic precursors from aggregation and guide them through the mitochondrial intermembrane space. The protein is Mitochondrial import inner membrane translocase subunit Tim8 B (Timm8b) of Mus musculus (Mouse).